A 264-amino-acid chain; its full sequence is Thiazole synthase (264 aa).

Lysine 101 serves as the catalytic Schiff-base intermediate with DXP. 1-deoxy-D-xylulose 5-phosphate-binding positions include glycine 162, 189–190 (AG), and 211–212 (NT). The interval 245 to 264 (KRQTASPSTPTLGQPFWHNQ) is disordered.

The protein belongs to the ThiG family. Homotetramer. Forms heterodimers with either ThiH or ThiS.

It localises to the cytoplasm. The enzyme catalyses [ThiS sulfur-carrier protein]-C-terminal-Gly-aminoethanethioate + 2-iminoacetate + 1-deoxy-D-xylulose 5-phosphate = [ThiS sulfur-carrier protein]-C-terminal Gly-Gly + 2-[(2R,5Z)-2-carboxy-4-methylthiazol-5(2H)-ylidene]ethyl phosphate + 2 H2O + H(+). It participates in cofactor biosynthesis; thiamine diphosphate biosynthesis. Catalyzes the rearrangement of 1-deoxy-D-xylulose 5-phosphate (DXP) to produce the thiazole phosphate moiety of thiamine. Sulfur is provided by the thiocarboxylate moiety of the carrier protein ThiS. In vitro, sulfur can be provided by H(2)S. The sequence is that of Thiazole synthase from Cellvibrio japonicus (strain Ueda107) (Pseudomonas fluorescens subsp. cellulosa).